Reading from the N-terminus, the 313-residue chain is Homoserine O-acetyltransferase (313 aa).

The Acyl-thioester intermediate role is filled by cysteine 144. Positions 165 and 194 each coordinate substrate. The Proton acceptor role is filled by histidine 236. Residue glutamate 238 is part of the active site. Arginine 250 contacts substrate.

It belongs to the MetA family.

The protein resides in the cytoplasm. The enzyme catalyses L-homoserine + acetyl-CoA = O-acetyl-L-homoserine + CoA. It participates in amino-acid biosynthesis; L-methionine biosynthesis via de novo pathway; O-acetyl-L-homoserine from L-homoserine: step 1/1. Its function is as follows. Transfers an acetyl group from acetyl-CoA to L-homoserine, forming acetyl-L-homoserine. This is Homoserine O-acetyltransferase from Jannaschia sp. (strain CCS1).